The chain runs to 208 residues: MIAKGSEPWLFTAASVTALFAILSRATDGLPFLNYIANVGMALTFVMVIFFRDPERKVETSDTYMISPADGTVIDIRDRKICIFMFLQNVHVNRAPISGKISEIIYKKGGYLPAFCKDSERNERNEFIIHSKYGDVRVTQIAGIIARRIVTYSNVNDTVEQGQRIGMIRFGSRVDVTIPHDFDITVEKGERVLAGKTIIATIKNDRDF.

Ser172 functions as the Schiff-base intermediate with substrate; via pyruvic acid in the catalytic mechanism. The residue at position 172 (Ser172) is a Pyruvic acid (Ser); by autocatalysis.

The protein belongs to the phosphatidylserine decarboxylase family. PSD-A subfamily. Heterodimer of a large membrane-associated beta subunit and a small pyruvoyl-containing alpha subunit. Requires pyruvate as cofactor. Is synthesized initially as an inactive proenzyme. Formation of the active enzyme involves a self-maturation process in which the active site pyruvoyl group is generated from an internal serine residue via an autocatalytic post-translational modification. Two non-identical subunits are generated from the proenzyme in this reaction, and the pyruvate is formed at the N-terminus of the alpha chain, which is derived from the carboxyl end of the proenzyme. The post-translation cleavage follows an unusual pathway, termed non-hydrolytic serinolysis, in which the side chain hydroxyl group of the serine supplies its oxygen atom to form the C-terminus of the beta chain, while the remainder of the serine residue undergoes an oxidative deamination to produce ammonia and the pyruvoyl prosthetic group on the alpha chain.

It is found in the cell membrane. The catalysed reaction is archaetidylserine + H(+) = archaetidylethanolamine + CO2. Its function is as follows. Catalyzes the formation of archaetidylethanolamine (PtdEtn) from archaetidylserine (PtdSer). The sequence is that of Putative archaetidylserine decarboxylase proenzyme from Methanosarcina mazei (strain ATCC BAA-159 / DSM 3647 / Goe1 / Go1 / JCM 11833 / OCM 88) (Methanosarcina frisia).